Here is a 1104-residue protein sequence, read N- to C-terminus: General transcription factor II-I repeat domain-containing protein 1 (1104 aa).

Glycyl lysine isopeptide (Lys-Gly) (interchain with G-Cter in SUMO2) cross-links involve residues Lys-27, Lys-184, Lys-212, Lys-225, Lys-238, Lys-271, Lys-337, Lys-436, Lys-439, and Lys-443. One copy of the GTF2I-like 1 repeat lies at 119–213; that stretch reads LEQCSDVYLL…PDDGGQDTKA (95 aa). One copy of the GTF2I-like 2 repeat lies at 342–436; sequence IKEMEDINTL…FDERIFTGNK (95 aa). Ser-448 carries the phosphoserine modification. Residues 509–559 form a disordered region; that stretch reads SDPSPTSEEMTDSLPGHLPSEDSGYGMEMPADKGPSEEPWSEERPAEESPG. Residues 538–555 show a composition bias toward basic and acidic residues; it reads PADKGPSEEPWSEERPAE. The GTF2I-like 3 repeat unit spans residues 556–650; the sequence is ESPGDVIRPL…ELLTDGVKEP (95 aa). Glycyl lysine isopeptide (Lys-Gly) (interchain with G-Cter in SUMO2) cross-links involve residues Lys-567, Lys-579, Lys-588, Lys-622, Lys-638, Lys-669, Lys-709, Lys-717, Lys-757, Lys-759, and Lys-772. Residues 681-775 form a GTF2I-like 4 repeat; sequence LSRIDIANTL…FQGLIPKPET (95 aa). Residues 783-802 form a disordered region; that stretch reads EAGKTTRPRRLQQDTWQPDE. The GTF2I-like 5 repeat unit spans residues 805–899; that stretch reads ANRLGEKVIL…LQPFAEVCND (95 aa). Glycyl lysine isopeptide (Lys-Gly) (interchain with G-Cter in SUMO2) cross-links involve residues Lys-841 and Lys-901. A GTF2I-like 6 repeat occupies 908 to 1002; sequence SNKLGKKVIL…LQPFGDVCNN (95 aa). Disordered stretches follow at residues 1001-1044 and 1058-1104; these read NNAK…VAST and LHPN…LPTR. A Nuclear localization signal motif is present at residues 1012–1019; that stretch reads PKRKRKRV. Residues 1021 to 1043 show a composition bias toward low complexity; sequence EGNSVSSSSSSSSSSSNPESVAS.

Belongs to the TFII-I family. In terms of assembly, interacts with the retinoblastoma protein (RB1) via its C-terminus. As to expression, widely expressed.

It localises to the nucleus. Its function is as follows. May be a transcription regulator involved in cell-cycle progression and skeletal muscle differentiation. May repress GTF2I transcriptional functions, by preventing its nuclear residency, or by inhibiting its transcriptional activation. May contribute to slow-twitch fiber type specificity during myogenesis and in regenerating muscles. Binds troponin I slow-muscle fiber enhancer (USE B1). Binds specifically and with high affinity to the EFG sequences derived from the early enhancer of HOXC8. The protein is General transcription factor II-I repeat domain-containing protein 1 (Gtf2ird1) of Mus musculus (Mouse).